A 47-amino-acid polypeptide reads, in one-letter code: Lysis protein for colicins E2 and E3 (47 aa).

The signal sequence occupies residues 1-19 (MKKITGIILLLLAVIILSA). The N-palmitoyl cysteine moiety is linked to residue Cys-20. Cys-20 carries S-diacylglycerol cysteine lipidation.

It localises to the cell outer membrane. Functionally, lysis proteins are required for both colicin release and partial cell lysis. In Escherichia coli, this protein is Lysis protein for colicins E2 and E3 (hic).